A 96-amino-acid polypeptide reads, in one-letter code: MLTGKQKRFLRSKAHHLTPIFQVGKGGVNDNMIKQIAEALEARELIKVSVLQNCEEDKNDVAEALVKGSRSQLVQTIGNTIVLYKESKENKQIELP.

A CRM domain is found at 1 to 96 (MLTGKQKRFL…SKENKQIELP (96 aa)).

The chain is Probable RNA-binding protein YqeI (yqeI) from Bacillus subtilis (strain 168).